We begin with the raw amino-acid sequence, 222 residues long: Superoxide dismutase [Mn], mitochondrial (222 aa).

The N-terminal 24 residues, 1–24 (MLSRAVCGTGRQLAPALGYLGSRQ), are a transit peptide targeting the mitochondrion. Histidine 50 provides a ligand contact to Mn(2+). The residue at position 58 (tyrosine 58) is a 3'-nitrotyrosine. An N6-acetyllysine; alternate mark is found at lysine 68 and lysine 75. N6-succinyllysine; alternate is present on residues lysine 68 and lysine 75. A Mn(2+)-binding site is contributed by histidine 98. Lysine 114 is subject to N6-acetyllysine. An N6-acetyllysine; alternate mark is found at lysine 122 and lysine 130. N6-succinyllysine; alternate is present on residues lysine 122 and lysine 130. The Mn(2+) site is built by aspartate 183 and histidine 187. At lysine 202 the chain carries N6-acetyllysine.

The protein belongs to the iron/manganese superoxide dismutase family. Homotetramer. Mn(2+) is required as a cofactor. Post-translationally, nitrated under oxidative stress. Nitration coupled with oxidation inhibits the catalytic activity. Acetylation at Lys-122 decreases enzymatic activity. Deacetylated by SIRT3 upon exposure to ionizing radiations or after long fasting. In terms of processing, polyubiquitinated; leading to proteasomal degradation. Deubiquitinated by USP36 which increases protein stability.

The protein localises to the mitochondrion matrix. It catalyses the reaction 2 superoxide + 2 H(+) = H2O2 + O2. Destroys superoxide anion radicals which are normally produced within the cells and which are toxic to biological systems. This is Superoxide dismutase [Mn], mitochondrial (SOD2) from Macaca nemestrina (Pig-tailed macaque).